The sequence spans 211 residues: High frequency lysogenization protein HflD homolog (211 aa).

This sequence belongs to the HflD family.

The protein localises to the cytoplasm. It localises to the cell membrane. This Buchnera aphidicola subsp. Acyrthosiphon pisum (strain 5A) protein is High frequency lysogenization protein HflD homolog.